The following is a 557-amino-acid chain: Polypyrimidine tract-binding protein 1 (557 aa).

An N-acetylmethionine modification is found at Met-1. Residue Ser-16 is modified to Phosphoserine. 3 RRM domains span residues Arg-59–Asn-143, Leu-184–Leu-260, and Ser-363–His-437. Lys-65 participates in a covalent cross-link: Glycyl lysine isopeptide (Lys-Gly) (interchain with G-Cter in SUMO2). Tyr-127 carries the post-translational modification Phosphotyrosine. Residue Thr-138 is modified to Phosphothreonine. Position 141 is a phosphoserine (Ser-141). Lys-218 is covalently cross-linked (Glycyl lysine isopeptide (Lys-Gly) (interchain with G-Cter in SUMO2)). Ser-459 bears the Phosphoserine mark. Positions Ala-480–Ser-555 constitute an RRM 4 domain.

In terms of assembly, monomer. Part of a ternary complex containing KHSRP, PTBP1, PTBP2 and HNRPH1. Interacts with RAVER1 and SFPQ.

It localises to the nucleus. In terms of biological role, plays a role in pre-mRNA splicing and in the regulation of alternative splicing events. Activates exon skipping of its own pre-mRNA during muscle cell differentiation. Binds to the polypyrimidine tract of introns. May promote RNA looping when bound to two separate polypyrimidine tracts in the same pre-mRNA. May promote the binding of U2 snRNP to pre-mRNA. Cooperates with RAVER1 to modulate switching between mutually exclusive exons during maturation of the TPM1 pre-mRNA. Represses the splicing of MAPT/Tau exon 10. Binds to polypyrimidine-rich controlling element (PCE) of CFTR and promotes exon skipping of CFTR exon 9, thereby antagonizing TIA1 and its role in exon inclusion of CFTR exon 9. Plays a role in the splicing of pyruvate kinase PKM by binding repressively to a polypyrimidine tract flanking PKM exon 9, inhibiting exon 9 inclusion and resulting in exon 10 inclusion and production of the PKM M2 isoform. The sequence is that of Polypyrimidine tract-binding protein 1 (PTBP1) from Sus scrofa (Pig).